A 922-amino-acid chain; its full sequence is Dual serine/threonine and tyrosine protein kinase (922 aa).

The 255-residue stretch at 645 to 899 (PKLGRELGRG…PLLGIVEPSL (255 aa)) folds into the Protein kinase domain. Residues 651-659 (LGRGQYGVV) and lysine 674 each bind ATP. Aspartate 770 serves as the catalytic Proton acceptor.

The protein belongs to the protein kinase superfamily. Ser/Thr protein kinase family.

Its subcellular location is the cytoplasm. It is found in the cell membrane. It localises to the apical cell membrane. The protein resides in the basolateral cell membrane. The protein localises to the cell junction. The enzyme catalyses L-seryl-[protein] + ATP = O-phospho-L-seryl-[protein] + ADP + H(+). It catalyses the reaction L-threonyl-[protein] + ATP = O-phospho-L-threonyl-[protein] + ADP + H(+). The catalysed reaction is L-tyrosyl-[protein] + ATP = O-phospho-L-tyrosyl-[protein] + ADP + H(+). Functionally, may act as a positive regulator of ERK phosphorylation downstream of fibroblast growth factor-receptor activation. May induce both caspase-dependent apoptosis and caspase-independent cell death. May play a role in the embryonic development. This chain is Dual serine/threonine and tyrosine protein kinase, found in Tetraodon nigroviridis (Spotted green pufferfish).